Here is a 436-residue protein sequence, read N- to C-terminus: Glutamyl-tRNA reductase (436 aa).

Substrate is bound by residues 52–55 (TCHR), Ser105, 110–112 (EDQ), and Gln116. Catalysis depends on Cys53, which acts as the Nucleophile. An NADP(+)-binding site is contributed by 184–189 (GAGEMG).

This sequence belongs to the glutamyl-tRNA reductase family. In terms of assembly, homodimer.

The catalysed reaction is (S)-4-amino-5-oxopentanoate + tRNA(Glu) + NADP(+) = L-glutamyl-tRNA(Glu) + NADPH + H(+). It functions in the pathway porphyrin-containing compound metabolism; protoporphyrin-IX biosynthesis; 5-aminolevulinate from L-glutamyl-tRNA(Glu): step 1/2. Functionally, catalyzes the NADPH-dependent reduction of glutamyl-tRNA(Glu) to glutamate 1-semialdehyde (GSA). The chain is Glutamyl-tRNA reductase from Halobacterium salinarum (strain ATCC 29341 / DSM 671 / R1).